We begin with the raw amino-acid sequence, 314 residues long: tRNA pseudouridine synthase B (314 aa).

A substrate-binding site is contributed by H43. D48 (nucleophile) is an active-site residue. Substrate contacts are provided by Y76, Y179, and L200.

It belongs to the pseudouridine synthase TruB family. Type 1 subfamily.

The catalysed reaction is uridine(55) in tRNA = pseudouridine(55) in tRNA. Responsible for synthesis of pseudouridine from uracil-55 in the psi GC loop of transfer RNAs. The chain is tRNA pseudouridine synthase B from Escherichia coli O157:H7.